The following is a 93-amino-acid chain: Large ribosomal subunit protein uL23cz/uL23cy (93 aa).

The protein belongs to the universal ribosomal protein uL23 family. As to quaternary structure, part of the 50S ribosomal subunit.

The protein localises to the plastid. It is found in the chloroplast. In terms of biological role, binds to 23S rRNA. The polypeptide is Large ribosomal subunit protein uL23cz/uL23cy (rpl23-A) (Coffea arabica (Arabian coffee)).